Here is a 488-residue protein sequence, read N- to C-terminus: Glutamyl-tRNA(Gln) amidotransferase subunit A (488 aa).

Catalysis depends on charge relay system residues K77 and S152. S176 (acyl-ester intermediate) is an active-site residue.

This sequence belongs to the amidase family. GatA subfamily. As to quaternary structure, heterotrimer of A, B and C subunits.

It carries out the reaction L-glutamyl-tRNA(Gln) + L-glutamine + ATP + H2O = L-glutaminyl-tRNA(Gln) + L-glutamate + ADP + phosphate + H(+). Its function is as follows. Allows the formation of correctly charged Gln-tRNA(Gln) through the transamidation of misacylated Glu-tRNA(Gln) in organisms which lack glutaminyl-tRNA synthetase. The reaction takes place in the presence of glutamine and ATP through an activated gamma-phospho-Glu-tRNA(Gln). The protein is Glutamyl-tRNA(Gln) amidotransferase subunit A of Streptococcus suis (strain 05ZYH33).